The chain runs to 63 residues: Large ribosomal subunit protein uL30 (63 aa).

Belongs to the universal ribosomal protein uL30 family. In terms of assembly, part of the 50S ribosomal subunit.

The sequence is that of Large ribosomal subunit protein uL30 from Caulobacter sp. (strain K31).